Consider the following 341-residue polypeptide: Tetraacyldisaccharide 4'-kinase (341 aa).

54–61 contacts ATP; sequence TVGGTGKT.

The protein belongs to the LpxK family.

It carries out the reaction a lipid A disaccharide + ATP = a lipid IVA + ADP + H(+). Its pathway is glycolipid biosynthesis; lipid IV(A) biosynthesis; lipid IV(A) from (3R)-3-hydroxytetradecanoyl-[acyl-carrier-protein] and UDP-N-acetyl-alpha-D-glucosamine: step 6/6. Functionally, transfers the gamma-phosphate of ATP to the 4'-position of a tetraacyldisaccharide 1-phosphate intermediate (termed DS-1-P) to form tetraacyldisaccharide 1,4'-bis-phosphate (lipid IVA). This chain is Tetraacyldisaccharide 4'-kinase, found in Mesorhizobium japonicum (strain LMG 29417 / CECT 9101 / MAFF 303099) (Mesorhizobium loti (strain MAFF 303099)).